A 25-amino-acid chain; its full sequence is QSERFEQQMQGQDFSHDERFLSQAA.

The tract at residues 1-25 (QSERFEQQMQGQDFSHDERFLSQAA) is disordered. Residues 14–25 (FSHDERFLSQAA) are compositionally biased toward basic and acidic residues.

The protein belongs to the 2S seed storage albumins family. In terms of tissue distribution, expressed in seed (at protein level). Not detected in pulp, stems and leaves.

In terms of biological role, has strong antifungal activity against T.harzianum, F.oxysporum and A.fumigatus with IC(50) values of 32 ug/ml, 34 ug/ml and 40 ug/ml, restectively. Lacks antifungal activity against R.solani, P.brasiliensis and C.albicans. The sequence is that of Antifungal protein 1 from Passiflora edulis (Passion fruit).